We begin with the raw amino-acid sequence, 299 residues long: 4-diphosphocytidyl-2-C-methyl-D-erythritol kinase (299 aa).

Lysine 22 is a catalytic residue. Residue proline 108–serine 118 participates in ATP binding. Residue aspartate 150 is part of the active site.

Belongs to the GHMP kinase family. IspE subfamily.

The catalysed reaction is 4-CDP-2-C-methyl-D-erythritol + ATP = 4-CDP-2-C-methyl-D-erythritol 2-phosphate + ADP + H(+). It functions in the pathway isoprenoid biosynthesis; isopentenyl diphosphate biosynthesis via DXP pathway; isopentenyl diphosphate from 1-deoxy-D-xylulose 5-phosphate: step 3/6. In terms of biological role, catalyzes the phosphorylation of the position 2 hydroxy group of 4-diphosphocytidyl-2C-methyl-D-erythritol. The polypeptide is 4-diphosphocytidyl-2-C-methyl-D-erythritol kinase (Desulfotalea psychrophila (strain LSv54 / DSM 12343)).